Here is a 222-residue protein sequence, read N- to C-terminus: Uracil-DNA glycosylase (222 aa).

Residue Asp-61 is the Proton acceptor of the active site.

This sequence belongs to the uracil-DNA glycosylase (UDG) superfamily. UNG family.

The protein localises to the cytoplasm. It carries out the reaction Hydrolyzes single-stranded DNA or mismatched double-stranded DNA and polynucleotides, releasing free uracil.. Its function is as follows. Excises uracil residues from the DNA which can arise as a result of misincorporation of dUMP residues by DNA polymerase or due to deamination of cytosine. This chain is Uracil-DNA glycosylase, found in Aeromonas salmonicida (strain A449).